The primary structure comprises 281 residues: Auxin-responsive protein IAA19 (281 aa).

The EAR-like (transcriptional repression) motif lies at 40-44 (LRLGL). The disordered stretch occupies residues 66–126 (LGPAPPPRGG…AAGAPRAAKA (61 aa)). The segment covering 79–91 (GFVDSLDRSEGRR) has biased composition (basic and acidic residues). The segment covering 114-126 (GEAAAGAPRAAKA) has biased composition (low complexity). One can recognise a PB1 domain in the interval 161–265 (CCYVKVSMDG…RKLRIMRGSD (105 aa)).

It belongs to the Aux/IAA family. In terms of assembly, homodimers and heterodimers. In terms of tissue distribution, expressed in etiolated seedlings and flowers.

The protein localises to the nucleus. Its function is as follows. Aux/IAA proteins are short-lived transcriptional factors that function as repressors of early auxin response genes at low auxin concentrations. This Oryza sativa subsp. japonica (Rice) protein is Auxin-responsive protein IAA19 (IAA19).